The primary structure comprises 382 residues: Galactokinase (382 aa).

34–37 (EHTD) contacts substrate. 124 to 130 (GAGLSSS) provides a ligand contact to ATP. Serine 130 and glutamate 162 together coordinate Mg(2+). Catalysis depends on aspartate 174, which acts as the Proton acceptor. Position 223 (tyrosine 223) interacts with substrate.

The protein belongs to the GHMP kinase family. GalK subfamily.

It is found in the cytoplasm. It catalyses the reaction alpha-D-galactose + ATP = alpha-D-galactose 1-phosphate + ADP + H(+). It participates in carbohydrate metabolism; galactose metabolism. Its function is as follows. Catalyzes the transfer of the gamma-phosphate of ATP to D-galactose to form alpha-D-galactose-1-phosphate (Gal-1-P). This is Galactokinase from Shigella flexneri.